A 309-amino-acid chain; its full sequence is Homoserine O-succinyltransferase (309 aa).

Residue Cys142 is the Acyl-thioester intermediate of the active site. Substrate is bound by residues Lys163 and Ser192. His235 serves as the catalytic Proton acceptor. The active site involves Glu237. Arg249 provides a ligand contact to substrate.

Belongs to the MetA family. Homodimer.

It localises to the cytoplasm. It carries out the reaction L-homoserine + succinyl-CoA = O-succinyl-L-homoserine + CoA. It participates in amino-acid biosynthesis; L-methionine biosynthesis via de novo pathway; O-succinyl-L-homoserine from L-homoserine: step 1/1. Transfers a succinyl group from succinyl-CoA to L-homoserine, forming succinyl-L-homoserine. In Salmonella gallinarum (strain 287/91 / NCTC 13346), this protein is Homoserine O-succinyltransferase.